The chain runs to 707 residues: MKITGVIVRIHKDRAIIRTDDNRLLAVKRHNDMMVGQIVSFDANEVHKVESKKYKYAASGKRIEKVQKTPKIKNFSRINNIKEFSRVDDIKNFSRVAATKETSQDSPQESKVENFSRVVDFSRVMNFSRVSNSKKNEIKNFSRISNIKNFSRIASIAAAFVLIFLFGRNVMLNNSSDSEYAYVSVDVNPSVEFTINSKHKVIVTSAINQDASEVLDGLELKEKDLKSALVMVLEKAESLGYISDDKNYVLVSMALNDKNKKTRDKREEKIDELKETIEQGIEALDNDTIVHRTVTVDLEERNKALENELSMGRYYLYLEAKEKGMDITIDEVKSSKISDLIEKIEDNTELAPTPTPVPPETPEPTPTPTASEATPSNSPVESKSPEAVPELGSREIEILGESVVLVTAYDENRKVVSQGSGFAVGTGLFATNYHLVKDGVVVKITAGDGKVYDVDGIVKYDKAKDLALLKTRVETGVNPLKLGTKKSLTKGSRIVAIGKANGAKNTVTKGSIKSLKVDGLTDAIELSASISKESTGGPVFDMKGNVVGITAYGISKQNVNAVIPADYVADWVKELSKHSFGNIRIVRKTLVFDSDFEFNFVVYKIIRALENEDAATYFGCMTDELYKDETRKNLEVLFTTYDLAYNIESINVVSKSEEQAKVSYVYTINKEAGPNFKNYRIIGECSLIKVDGTWKINDSEEKKEYIQ.

Residues 1–149 (MKITGVIVRI…NFSRISNIKN (149 aa)) are Cytoplasmic-facing. One can recognise a RsgI N-terminal anti-sigma domain in the interval 3-50 (ITGVIVRIHKDRAIIRTDDNRLLAVKRHNDMMVGQIVSFDANEVHKVE). A helical membrane pass occupies residues 150–172 (FSRIASIAAAFVLIFLFGRNVML). Residues 173–707 (NNSSDSEYAY…DSEEKKEYIQ (535 aa)) are Extracellular-facing. Positions 256 to 283 (NDKNKKTRDKREEKIDELKETIEQGIEA) form a coiled coil. Residues 345-392 (EDNTELAPTPTPVPPETPEPTPTPTASEATPSNSPVESKSPEAVPELG) form a disordered region. The segment covering 353-367 (TPTPVPPETPEPTPT) has biased composition (pro residues). Positions 368-379 (PTASEATPSNSP) are enriched in low complexity.

It is found in the cell membrane. The protein is Anti-sigma-I factor RsgI9 of Acetivibrio thermocellus (strain ATCC 27405 / DSM 1237 / JCM 9322 / NBRC 103400 / NCIMB 10682 / NRRL B-4536 / VPI 7372) (Clostridium thermocellum).